The chain runs to 155 residues: Ribosome maturation factor RimP (155 aa).

This sequence belongs to the RimP family.

Its subcellular location is the cytoplasm. Required for maturation of 30S ribosomal subunits. The chain is Ribosome maturation factor RimP from Listeria welshimeri serovar 6b (strain ATCC 35897 / DSM 20650 / CCUG 15529 / CIP 8149 / NCTC 11857 / SLCC 5334 / V8).